The primary structure comprises 121 residues: Large ribosomal subunit protein uL18 (121 aa).

The protein belongs to the universal ribosomal protein uL18 family. Part of the 50S ribosomal subunit; part of the 5S rRNA/L5/L18/L25 subcomplex. Contacts the 5S and 23S rRNAs.

Its function is as follows. This is one of the proteins that bind and probably mediate the attachment of the 5S RNA into the large ribosomal subunit, where it forms part of the central protuberance. The protein is Large ribosomal subunit protein uL18 of Dehalococcoides mccartyi (strain ATCC BAA-2266 / KCTC 15142 / 195) (Dehalococcoides ethenogenes (strain 195)).